Consider the following 161-residue polypeptide: Cytochrome c-type biogenesis protein CcmE (161 aa).

The Cytoplasmic segment spans residues 1-8; the sequence is MNPRRKKR. A helical; Signal-anchor for type II membrane protein transmembrane segment spans residues 9-29; sequence LGIVLAIFIGISATIGLMLYA. Topologically, residues 30 to 161 are periplasmic; the sequence is LNQNMDLFYT…SSEQKQGSGE (132 aa). Positions 129 and 133 each coordinate heme. The interval 142-161 is disordered; that stretch reads MKKTHEPLQYSSEQKQGSGE. A compositionally biased stretch (polar residues) spans 150-161; that stretch reads QYSSEQKQGSGE.

The protein belongs to the CcmE/CycJ family.

The protein localises to the cell inner membrane. Its function is as follows. Heme chaperone required for the biogenesis of c-type cytochromes. Transiently binds heme delivered by CcmC and transfers the heme to apo-cytochromes in a process facilitated by CcmF and CcmH. This chain is Cytochrome c-type biogenesis protein CcmE, found in Vibrio parahaemolyticus serotype O3:K6 (strain RIMD 2210633).